The sequence spans 425 residues: C2H2 type master regulator of conidiophore development brlA (425 aa).

3 disordered regions span residues 28 to 72, 232 to 257, and 281 to 301; these read MASS…RHTG, KTHS…PMSR, and VQRQ…SLSL. Low complexity predominate over residues 30–44; that stretch reads SSFSPMESPTPTPTS. Over residues 232–256 the composition is skewed to polar residues; sequence KTHSPTTPVRSCSLGTTSGTDTPMS. Basic residues predominate over residues 285–294; sequence PSRKVARKQS. 2 consecutive C2H2-type zinc fingers follow at residues 321 to 345 and 351 to 376; these read KGRF…PHVC and ERAF…GRNR. The span at 365 to 374 shows a compositional bias: basic residues; sequence TKTHSKRGGR. The disordered stretch occupies residues 365–425; the sequence is TKTHSKRGGR…RETSEEAWLE (61 aa).

Its subcellular location is the nucleus. BrlA, abaA and wetA are pivotal regulators of conidiophore development and conidium maturation. They act individually and together to regulate their own expression and that of numerous other sporulation-specific genes. Binds promoters of target genes at brlA response elements (BREs) containing the conserved sequence 5'-(C/A)(A/G)AGGG(G/A)-3'. Also coordinates the expression of carbohydrate-active enzymes and of the key effectors of cell wall remodeling during autolysis. The protein is C2H2 type master regulator of conidiophore development brlA of Aspergillus niger (strain ATCC MYA-4892 / CBS 513.88 / FGSC A1513).